The following is a 210-amino-acid chain: Adenylate kinase (210 aa).

ATP is bound at residue 10-15 (GSGKGT). The tract at residues 30–59 (STGDLFRANISNATPLGKEIKQIVENGQLV) is NMP. AMP is bound by residues T31, R36, 57–59 (QLV), 85–88 (GFPR), and Q92. Residues 121 to 158 (GRRICQSCGGIFNIYTLPTKEKGICDLCKGSLYQRKDD) are LID. Position 122 (R122) interacts with ATP. Zn(2+)-binding residues include C125 and C128. 131 to 132 (IF) provides a ligand contact to ATP. Positions 145 and 148 each coordinate Zn(2+). 2 residues coordinate AMP: R155 and R166. ATP is bound at residue K194.

It belongs to the adenylate kinase family. Monomer.

The protein localises to the cytoplasm. It catalyses the reaction AMP + ATP = 2 ADP. It participates in purine metabolism; AMP biosynthesis via salvage pathway; AMP from ADP: step 1/1. Catalyzes the reversible transfer of the terminal phosphate group between ATP and AMP. Plays an important role in cellular energy homeostasis and in adenine nucleotide metabolism. In Borrelia turicatae (strain 91E135), this protein is Adenylate kinase.